The following is a 715-amino-acid chain: 1,4-alpha-glucan branching enzyme GlgB (715 aa).

Asp-396 acts as the Nucleophile in catalysis. Glu-449 acts as the Proton donor in catalysis.

The protein belongs to the glycosyl hydrolase 13 family. GlgB subfamily. As to quaternary structure, monomer.

The catalysed reaction is Transfers a segment of a (1-&gt;4)-alpha-D-glucan chain to a primary hydroxy group in a similar glucan chain.. Its pathway is glycan biosynthesis; glycogen biosynthesis. In terms of biological role, catalyzes the formation of the alpha-1,6-glucosidic linkages in glycogen by scission of a 1,4-alpha-linked oligosaccharide from growing alpha-1,4-glucan chains and the subsequent attachment of the oligosaccharide to the alpha-1,6 position. This is 1,4-alpha-glucan branching enzyme GlgB from Vibrio vulnificus (strain YJ016).